We begin with the raw amino-acid sequence, 307 residues long: Epimerase family protein ML0860 (307 aa).

Belongs to the NAD(P)-dependent epimerase/dehydratase family. SDR39U1 subfamily.

The protein is Epimerase family protein ML0860 of Mycobacterium leprae (strain TN).